The sequence spans 370 residues: L-lysine 4-hydroxylase (370 aa).

Residues His176, Glu178, and His310 each coordinate Fe cation.

Belongs to the clavaminate synthase family. Requires Fe(2+) as cofactor.

It catalyses the reaction L-lysine + 2-oxoglutarate + O2 = (4R)-4-hydroxy-L-lysine + succinate + CO2. Functionally, alpha-ketoglutarate-dependent dioxygenase that in vitro catalyzes the regio- and stereoselective hydroxylation of L-lysine, leading to (4R)-4-hydroxy-L-lysine. To a lesser extent, can also use (3S)-3-hydroxy-L-lysine as substrate, producing the dihydroxylated product (3R,4R)-3,4-hydroxy-L-lysine. Cannot use D-lysine or L-ornithine as substrate. This Flavobacterium johnsoniae (strain ATCC 17061 / DSM 2064 / JCM 8514 / BCRC 14874 / CCUG 350202 / NBRC 14942 / NCIMB 11054 / UW101) (Cytophaga johnsonae) protein is L-lysine 4-hydroxylase.